The primary structure comprises 198 residues: Protein LKAAEAR1 (198 aa).

Residues 1–47 form a disordered region; the sequence is MPTLGVKGARERDKNSASGAGAGAGAGAGAGEKHRKGPRTTDPPKTG. Positions 20-30 are enriched in gly residues; sequence AGAGAGAGAGA.

The chain is Protein LKAAEAR1 (Lkaaear1) from Mus musculus (Mouse).